The primary structure comprises 197 residues: Glycerol-3-phosphate acyltransferase (197 aa).

Transmembrane regions (helical) follow at residues L2–V22, A53–L73, P78–F98, V112–A132, and Y152–V174.

The protein belongs to the PlsY family. Probably interacts with PlsX.

The protein localises to the cell inner membrane. The enzyme catalyses an acyl phosphate + sn-glycerol 3-phosphate = a 1-acyl-sn-glycero-3-phosphate + phosphate. Its pathway is lipid metabolism; phospholipid metabolism. Functionally, catalyzes the transfer of an acyl group from acyl-phosphate (acyl-PO(4)) to glycerol-3-phosphate (G3P) to form lysophosphatidic acid (LPA). This enzyme utilizes acyl-phosphate as fatty acyl donor, but not acyl-CoA or acyl-ACP. In Halorhodospira halophila (strain DSM 244 / SL1) (Ectothiorhodospira halophila (strain DSM 244 / SL1)), this protein is Glycerol-3-phosphate acyltransferase.